We begin with the raw amino-acid sequence, 546 residues long: ATP synthase subunit alpha (546 aa).

172-179 (GDRKTGKT) serves as a coordination point for ATP.

This sequence belongs to the ATPase alpha/beta chains family. In terms of assembly, F-type ATPases have 2 components, CF(1) - the catalytic core - and CF(0) - the membrane proton channel. CF(1) has five subunits: alpha(3), beta(3), gamma(1), delta(1), epsilon(1). CF(0) has three main subunits: a(1), b(2) and c(9-12). The alpha and beta chains form an alternating ring which encloses part of the gamma chain. CF(1) is attached to CF(0) by a central stalk formed by the gamma and epsilon chains, while a peripheral stalk is formed by the delta and b chains.

It is found in the cell membrane. It catalyses the reaction ATP + H2O + 4 H(+)(in) = ADP + phosphate + 5 H(+)(out). Its function is as follows. Produces ATP from ADP in the presence of a proton gradient across the membrane. The alpha chain is a regulatory subunit. This chain is ATP synthase subunit alpha, found in Corynebacterium efficiens (strain DSM 44549 / YS-314 / AJ 12310 / JCM 11189 / NBRC 100395).